Here is a 290-residue protein sequence, read N- to C-terminus: Ribosomal RNA small subunit methyltransferase A (290 aa).

Positions 27, 29, 54, 75, 100, and 125 each coordinate S-adenosyl-L-methionine.

Belongs to the class I-like SAM-binding methyltransferase superfamily. rRNA adenine N(6)-methyltransferase family. RsmA subfamily.

It localises to the cytoplasm. The catalysed reaction is adenosine(1518)/adenosine(1519) in 16S rRNA + 4 S-adenosyl-L-methionine = N(6)-dimethyladenosine(1518)/N(6)-dimethyladenosine(1519) in 16S rRNA + 4 S-adenosyl-L-homocysteine + 4 H(+). In terms of biological role, specifically dimethylates two adjacent adenosines (A1518 and A1519) in the loop of a conserved hairpin near the 3'-end of 16S rRNA in the 30S particle. May play a critical role in biogenesis of 30S subunits. This is Ribosomal RNA small subunit methyltransferase A from Streptococcus pneumoniae (strain ATCC BAA-255 / R6).